The primary structure comprises 336 residues: 4-hydroxythreonine-4-phosphate dehydrogenase (336 aa).

Thr-140 contributes to the substrate binding site. A divalent metal cation is bound by residues His-171, His-216, and His-271. Lys-279, Asn-288, and Arg-297 together coordinate substrate.

The protein belongs to the PdxA family. As to quaternary structure, homodimer. The cofactor is Zn(2+). Mg(2+) serves as cofactor. It depends on Co(2+) as a cofactor.

The protein resides in the cytoplasm. It carries out the reaction 4-(phosphooxy)-L-threonine + NAD(+) = 3-amino-2-oxopropyl phosphate + CO2 + NADH. The protein operates within cofactor biosynthesis; pyridoxine 5'-phosphate biosynthesis; pyridoxine 5'-phosphate from D-erythrose 4-phosphate: step 4/5. Its function is as follows. Catalyzes the NAD(P)-dependent oxidation of 4-(phosphooxy)-L-threonine (HTP) into 2-amino-3-oxo-4-(phosphooxy)butyric acid which spontaneously decarboxylates to form 3-amino-2-oxopropyl phosphate (AHAP). This Erythrobacter litoralis (strain HTCC2594) protein is 4-hydroxythreonine-4-phosphate dehydrogenase.